The primary structure comprises 253 residues: Sulfate transporter CysZ (253 aa).

Helical transmembrane passes span 31-51 (FVIL…WWLF), 75-95 (LLWP…FSTI), 151-171 (IVLL…PVLW), and 222-242 (IPLL…AMWV).

The protein belongs to the CysZ family.

Its subcellular location is the cell inner membrane. In terms of biological role, high affinity, high specificity proton-dependent sulfate transporter, which mediates sulfate uptake. Provides the sulfur source for the cysteine synthesis pathway. The chain is Sulfate transporter CysZ from Escherichia coli (strain 55989 / EAEC).